Consider the following 250-residue polypeptide: 23S rRNA (guanosine-2'-O-)-methyltransferase RlmB (250 aa).

Residues Gly197, Ile217, and Met226 each coordinate S-adenosyl-L-methionine.

The protein belongs to the class IV-like SAM-binding methyltransferase superfamily. RNA methyltransferase TrmH family. RlmB subfamily.

The protein resides in the cytoplasm. The enzyme catalyses guanosine(2251) in 23S rRNA + S-adenosyl-L-methionine = 2'-O-methylguanosine(2251) in 23S rRNA + S-adenosyl-L-homocysteine + H(+). In terms of biological role, specifically methylates the ribose of guanosine 2251 in 23S rRNA. The sequence is that of 23S rRNA (guanosine-2'-O-)-methyltransferase RlmB from Neisseria meningitidis serogroup B (strain ATCC BAA-335 / MC58).